The primary structure comprises 461 residues: Putative long chain fatty acid-CoA ligase VraA (461 aa).

The protein belongs to the ATP-dependent AMP-binding enzyme family.

The protein is Putative long chain fatty acid-CoA ligase VraA (vraA) of Staphylococcus haemolyticus (strain JCSC1435).